Consider the following 232-residue polypeptide: Octanoyltransferase (232 aa).

In terms of domain architecture, BPL/LPL catalytic spans 33 to 216 (GRAQDTVILL…HLVRALSNGS (184 aa)). Substrate-binding positions include 71–78 (RGGRITWH), 146–148 (AIG), and 159–161 (GFA). Residue C177 is the Acyl-thioester intermediate of the active site.

Belongs to the LipB family.

It is found in the cytoplasm. The catalysed reaction is octanoyl-[ACP] + L-lysyl-[protein] = N(6)-octanoyl-L-lysyl-[protein] + holo-[ACP] + H(+). It functions in the pathway protein modification; protein lipoylation via endogenous pathway; protein N(6)-(lipoyl)lysine from octanoyl-[acyl-carrier-protein]: step 1/2. Its function is as follows. Catalyzes the transfer of endogenously produced octanoic acid from octanoyl-acyl-carrier-protein onto the lipoyl domains of lipoate-dependent enzymes. Lipoyl-ACP can also act as a substrate although octanoyl-ACP is likely to be the physiological substrate. This Clavibacter sepedonicus (Clavibacter michiganensis subsp. sepedonicus) protein is Octanoyltransferase.